The sequence spans 643 residues: Inorganic pyrophosphatase TTM1 (643 aa).

The N-terminal 15 residues, Met-1 to His-15, are a transit peptide targeting the mitochondrion. In terms of domain architecture, CYTH spans Asn-248–Leu-410. A helical transmembrane segment spans residues Leu-618 to Ala-638.

Mg(2+) serves as cofactor. In terms of tissue distribution, ubiquitously expressed in all tissues, with strong expression detected in senescent leaves.

It is found in the mitochondrion outer membrane. The enzyme catalyses diphosphate + H2O = 2 phosphate + H(+). Its function is as follows. Exhibits pyrophosphatase activity with stronger affinity for pyrophosphate (PPi), moderate affinity for ATP and ADP, and weak affinity for tripolyphosphate (PPPi). No activity observed toward uridine substrate. Positively regulates natural and dark-induced leaf senescence. In Arabidopsis thaliana (Mouse-ear cress), this protein is Inorganic pyrophosphatase TTM1.